Reading from the N-terminus, the 395-residue chain is Elongation factor Tu (395 aa).

In terms of domain architecture, tr-type G spans 10 to 204; the sequence is KPHLNIGTIG…TVDNYIKEPI (195 aa). Residues 19-26 form a G1 region; it reads GHVDHGKT. GTP is bound at residue 19-26; that stretch reads GHVDHGKT. Thr26 lines the Mg(2+) pocket. The segment at 60–64 is G2; it reads GITIN. The tract at residues 81–84 is G3; sequence DCPG. Residues 81-85 and 136-139 each bind GTP; these read DCPGH and NKVD. A G4 region spans residues 136–139; the sequence is NKVD. Positions 174 to 176 are G5; that stretch reads SAL.

Belongs to the TRAFAC class translation factor GTPase superfamily. Classic translation factor GTPase family. EF-Tu/EF-1A subfamily. As to quaternary structure, monomer.

It localises to the cytoplasm. The enzyme catalyses GTP + H2O = GDP + phosphate + H(+). Functionally, GTP hydrolase that promotes the GTP-dependent binding of aminoacyl-tRNA to the A-site of ribosomes during protein biosynthesis. The sequence is that of Elongation factor Tu from Karelsulcia muelleri (strain GWSS) (Sulcia muelleri).